A 262-amino-acid chain; its full sequence is uncharacterized protein (262 aa).

A divalent metal cation-binding residues include histidine 7, histidine 9, glutamate 98, histidine 138, histidine 162, and aspartate 212.

Belongs to the metallo-dependent hydrolases superfamily. TatD-type hydrolase family. It depends on a divalent metal cation as a cofactor.

This is an uncharacterized protein from Haemophilus influenzae (strain ATCC 51907 / DSM 11121 / KW20 / Rd).